The primary structure comprises 219 residues: MSETAPAAPAAPAPAEKTPVKKKARKSAGAAKRKASGPPVSELITKAVAASKERSGVSLAALKKALAAAGYDVEKNNSRIKLGLKSLVSKGTLVQTKGTGASGSFKLNKKAAAGEAKPKPKKAGAAKPKKPAGAAKKPKKATGAATPKKGAKKTPKKAKKPAAAAGAKKAKSPKKAKAAKPKKAPKSPAKAKAVKPKAAKPKAAKPKTAKPKKAPAKKK.

A compositionally biased stretch (low complexity) spans 1–15 (MSETAPAAPAAPAPA). Positions 1 to 41 (MSETAPAAPAAPAPAEKTPVKKKARKSAGAAKRKASGPPVS) are disordered. At serine 2 the chain carries N-acetylserine. At serine 2 the chain carries Phosphoserine. At lysine 17 the chain carries N6-acetyllysine. At threonine 18 the chain carries Phosphothreonine. The span at 20–35 (VKKKARKSAGAAKRKA) shows a compositional bias: basic residues. Lysine 26 is modified (N6-acetyllysine; alternate). Residue lysine 26 is modified to N6-methyllysine; alternate. Lysine 34 is modified (N6-(beta-hydroxybutyryl)lysine; alternate). Position 34 is an N6-succinyllysine; alternate (lysine 34). The residue at position 36 (serine 36) is a Phosphoserine. The H15 domain maps to 36–109 (SGPPVSELIT…GASGSFKLNK (74 aa)). An N6-(beta-hydroxybutyryl)lysine modification is found at lysine 52. Arginine 54 carries the post-translational modification Citrulline. N6-(beta-hydroxybutyryl)lysine is present on residues lysine 64, lysine 85, lysine 90, and lysine 106. The tract at residues 91 to 219 (GTLVQTKGTG…KPKKAPAKKK (129 aa)) is disordered. The segment covering 119–140 (KPKKAGAAKPKKPAGAAKKPKK) has biased composition (basic residues). Threonine 146 is modified (phosphothreonine). 2 stretches are compositionally biased toward basic residues: residues 149–160 (KGAKKTPKKAKK) and 168–185 (KKAK…KKAP). Position 187 is a phosphoserine (serine 187). Residues 192–219 (KAVKPKAAKPKAAKPKTAKPKKAPAKKK) show a composition bias toward basic residues.

The protein belongs to the histone H1/H5 family. H1 histones are progressively phosphorylated during the cell cycle, becoming maximally phosphorylated during late G2 phase and M phase, and being dephosphorylated sharply thereafter. In terms of processing, acetylated at Lys-26. Deacetylated at Lys-26 by SIRT1. Post-translationally, citrullination at Arg-54 (H1R54ci) by PADI4 takes place within the DNA-binding site of H1 and results in its displacement from chromatin and global chromatin decondensation, thereby promoting pluripotency and stem cell maintenance.

The protein resides in the nucleus. The protein localises to the chromosome. Functionally, histone H1 protein binds to linker DNA between nucleosomes forming the macromolecular structure known as the chromatin fiber. Histones H1 are necessary for the condensation of nucleosome chains into higher-order structured fibers. Also acts as a regulator of individual gene transcription through chromatin remodeling, nucleosome spacing and DNA methylation. This chain is Histone H1.4, found in Oryctolagus cuniculus (Rabbit).